Consider the following 413-residue polypeptide: Transcription factor E2F4 (413 aa).

The tract at residues 1–20 (MAEAGPQAPPPPGTPSRHEK) is disordered. An N-acetylalanine modification is found at alanine 2. Residues 16–85 (SRHEKSLGLL…KNSIQWKGVG (70 aa)) mediate DNA binding. Positions 43–65 (LKLAADTLAVRQKRRIYDITNVL) are leucine-zipper. A DEF box motif is present at residues 48–85 (DTLAVRQKRRIYDITNVLEGIGLIEKKSKNSIQWKGVG). Positions 86 to 181 (PGCNTREIAD…GLNGQKKYQI (96 aa)) are dimerization. The interval 211–340 (PPEDLLQSPS…PSTSFEPIKA (130 aa)) is disordered. Polar residues-rich tracts occupy residues 234 to 249 (AQSQ…QLTP) and 293 to 306 (TLDT…ALLD). A compositionally biased stretch (low complexity) spans 307–327 (SSSSSSSSSSSSSNSNSSSSS). The interval 337–413 (PIKADPTGVL…DLFDVPVLNL (77 aa)) is transactivation. A Phosphoserine modification is found at serine 384. Residues 389-392 (DHDY) carry the HCFC1-binding-motif (HBM) motif. The segment at 390–407 (HDYIYNLDESEGVCDLFD) is interaction with RBL1 and RBL2.

This sequence belongs to the E2F/DP family. Component of the DRTF1/E2F transcription factor complex. Binds cooperatively with TFDP1/Dp-1 to E2F sites. The E2F4/TFDP1 dimer interacts preferentially with pocket protein RBL1, which inhibits the E2F transactivation domain. Lower affinity interaction has been found with retinoblastoma protein RB1. Interacts with TRRAP, which probably mediates its interaction with histone acetyltransferase complexes, leading to transcription activation. Interacts with HCFC1. Component of the DREAM complex (also named LINC complex) at least composed of E2F4, E2F5, LIN9, LIN37, LIN52, LIN54, MYBL1, MYBL2, RBL1, RBL2, RBBP4, TFDP1 and TFDP2. The complex exists in quiescent cells where it represses cell cycle-dependent genes. It dissociates in S phase when LIN9, LIN37, LIN52 and LIN54 form a subcomplex that binds to MYBL2. Interacts with PML (isoform PML-1, isoform PML-2, isoform PML-3, isoform PML-4 and isoform PML-5). Interacts with CEBPA (when phosphorylated). Post-translationally, differentially phosphorylated in vivo. In terms of tissue distribution, found in all tissue examined including heart, brain, placenta, lung, liver, skeletal muscle, kidney and pancreas.

It localises to the nucleus. Transcription activator that binds DNA cooperatively with DP proteins through the E2 recognition site, 5'-TTTC[CG]CGC-3' found in the promoter region of a number of genes whose products are involved in cell cycle regulation or in DNA replication. The DRTF1/E2F complex functions in the control of cell-cycle progression from G1 to S phase. E2F4 binds with high affinity to RBL1 and RBL2. In some instances can also bind RB1. Specifically required for multiciliate cell differentiation: together with MCIDAS and E2F5, binds and activate genes required for centriole biogenesis. The polypeptide is Transcription factor E2F4 (E2F4) (Homo sapiens (Human)).